The sequence spans 407 residues: Prolyl hydroxylase EGLN2 (407 aa).

Low complexity-rich tracts occupy residues 1–24 (MDSP…SSEP) and 57–75 (ASAG…TASP). Disordered stretches follow at residues 1–34 (MDSP…RARM), 50–89 (CPGV…GELR), and 108–157 (AAQG…CSSG). The Bipartite nuclear localization signal signature appears at 89-134 (RPLQSEGAAALVTKGCQRLAAQGARPEAPKRKWAEDGGDAPSPSKR). S130 carries the phosphoserine modification. The beta(2)beta(3) 'finger-like' loop stretch occupies residues 225–235 (VSQRAIPPRSI). One can recognise a Fe2OG dioxygenase domain in the interval 278–376 (GRTKAMVACY…RYAITVWYFD (99 aa)). Fe cation contacts are provided by H297, D299, and H358. R367 is a 2-oxoglutarate binding site.

Interacts (preferably isoform p40) with SIAH2; the interaction targets both SIAH2 isoforms for proteasomal degradation in vitro. Interacts with LIMD1, WTIP and AJUBA. Fe(2+) is required as a cofactor. It depends on L-ascorbate as a cofactor. In terms of processing, ubiquitinated by SIAH1 and/or SIAH2 in response to the unfolded protein response (UPR), leading to its degradation. Expressed in adult and fetal heart, brain, liver, lung, skeletal muscle, and kidney. Also expressed in testis and placenta. Highest levels in adult brain, placenta, lung, kidney, and testis. Expressed in hormone responsive tissues, including normal and cancerous mammary, ovarian and prostate epithelium.

It localises to the nucleus. It carries out the reaction L-prolyl-[protein] + 2-oxoglutarate + O2 = trans-4-hydroxy-L-prolyl-[protein] + succinate + CO2. The catalysed reaction is L-prolyl-[hypoxia-inducible factor alpha subunit] + 2-oxoglutarate + O2 = trans-4-hydroxy-L-prolyl-[hypoxia-inducible factor alpha subunit] + succinate + CO2. Prolyl hydroxylase that mediates hydroxylation of proline residues in target proteins, such as ATF4, IKBKB, CEP192 and HIF1A. Target proteins are preferentially recognized via a LXXLAP motif. Cellular oxygen sensor that catalyzes, under normoxic conditions, the post-translational formation of 4-hydroxyproline in hypoxia-inducible factor (HIF) alpha proteins. Hydroxylates a specific proline found in each of the oxygen-dependent degradation (ODD) domains (N-terminal, NODD, and C-terminal, CODD) of HIF1A. Also hydroxylates HIF2A. Has a preference for the CODD site for both HIF1A and HIF2A. Hydroxylated HIFs are then targeted for proteasomal degradation via the von Hippel-Lindau ubiquitination complex. Under hypoxic conditions, the hydroxylation reaction is attenuated allowing HIFs to escape degradation resulting in their translocation to the nucleus, heterodimerization with HIF1B, and increased expression of hypoxy-inducible genes. EGLN2 is involved in regulating hypoxia tolerance and apoptosis in cardiac and skeletal muscle. Also regulates susceptibility to normoxic oxidative neuronal death. Links oxygen sensing to cell cycle and primary cilia formation by hydroxylating the critical centrosome component CEP192 which promotes its ubiquitination and subsequent proteasomal degradation. Hydroxylates IKBKB, mediating NF-kappa-B activation in hypoxic conditions. Also mediates hydroxylation of ATF4, leading to decreased protein stability of ATF4. The chain is Prolyl hydroxylase EGLN2 from Homo sapiens (Human).